Here is a 949-residue protein sequence, read N- to C-terminus: Nonsense-mediated mRNA decay factor SMG8 (949 aa).

Disordered regions lie at residues 564 to 607, 624 to 652, and 748 to 768; these read SGAR…LSPT, NESQ…DTEN, and PKQQ…QQRW. Positions 571–581 are enriched in acidic residues; the sequence is EGDDEPEDEVV. The segment covering 594-607 has biased composition (polar residues); sequence NTASNGCSQPLSPT. A compositionally biased stretch (low complexity) spans 624 to 648; that stretch reads NESQASSEQLSNSEQNTSSSGTSSA. The segment covering 749 to 768 has biased composition (basic residues); that stretch reads KQQHHTHHQQQHPGKKQQRW.

It belongs to the SMG8 family.

Its function is as follows. Involved in nonsense-mediated decay (NMD) of mRNAs containing premature stop codons. Probable component of kinase complex containing nonC and recruited to stalled ribosomes. The chain is Nonsense-mediated mRNA decay factor SMG8 from Drosophila erecta (Fruit fly).